Consider the following 109-residue polypeptide: ALVMTQTPSPVSAAVGGTVTISCQASQSVYSNNLSWFQQKPGQPPKLLIYKASTLASGVPSRFKGSGSGTQFTLPISGVECDDAATYYCQGTNTGNNIVFGTGTEVVVK.

The segment at 1–23 (ALVMTQTPSPVSAAVGGTVTISC) is framework-1. The segment at 24 to 35 (QASQSVYSNNLS) is complementarity-determining-1. Residues 36 to 50 (WFQQKPGQPPKLLIY) are framework-2. Residues 51 to 57 (KASTLAS) are complementarity-determining-2. Positions 58-89 (GVPSRFKGSGSGTQFTLPISGVECDDAATYYC) are framework-3. The tract at residues 90 to 99 (QGTNTGNNIV) is complementarity-determining-3. Positions 100 to 109 (FGTGTEVVVK) are framework-4.

The chain is Ig kappa chain V region K16-167 from Oryctolagus cuniculus (Rabbit).